The chain runs to 1032 residues: Putative oxidoreductase YgfK (1032 aa).

Residues 928–958 form the 4Fe-4S ferredoxin-type domain; that stretch reads RFQTLHLDAYCNECGNCAQFCPWNGKPYKDK. [4Fe-4S] cluster is bound by residues C938, C941, C944, and C948.

[4Fe-4S] cluster serves as cofactor.

Functionally, could be an iron-sulfur flavoprotein with NADPH:O(2) oxidoreductase activity. The protein is Putative oxidoreductase YgfK (ygfK) of Escherichia coli O157:H7.